An 894-amino-acid chain; its full sequence is MFGALIKKIVGSKNERELRRLWPIVEQINHLEAEISSLSDDQLRNKTTEFKERYARGETLDSLLPEAFAVCREAGKRVLGMRHFDVQLIGGMVLHQGKIAEMKTGEGKTLVATLPSYLNALTGRGVHVITVNDYLARRDSEWMGRIHSFLGLSVGVIIHGLDDDERREAYNADITYGTNNEFGFDYLRDNMKFSLDDYVQRDFHYSIVDEVDSILIDEARTPLIISGPTEDSTDKYYIIDRIIPLLKKGEVLEEEANTLSGKRKRYTGDFTVDEKSKSATLTEEGVLKVEKLLKVDNLYDPRNMETLHHVNQALRAHALFKLDVDYVVKEGEVLIVDEFTGRLMPGRRWSDGLHQAIEAKEGVKIENENQTLATITFQNYFRMYEKLSGMTGTADTEAEEFHKIYKLDVVVIPTNRVLLRPDFPDVIYKTEGEKFNAVIEEIRELHAKGQPVLVGTISIEKSEVLSELLKRQGIPHNVLNAKQHEREAEIVAQGGRKGMITIATNMAGRGTDILLGGNADAMAKQWRRGNPEASDGEYERVLAQFKEQCANEHDEVVKLGGLHILGTERHESRRIDNQLRGRSGRQGDPGSSRFYLSLQDDLLRIFGSERVAKIMDMLKIEEGEAITHGLITKAIENAQRKVEAHNFEIRKHLIEYDDVMNKQREVIYAQRREILAGEGIRESFLDMVDETVADLAAGYAIDKVPAQEWDWQGMGDSIYKIFGFQVDIPAETMERLNPFNLRELLQEKVRELYTAKVAEFGDELMDHLIKVIMLQSIDTQWKDHLLSIDHLKEGIGLRGYGQKDPKQEYKKEAYQLFMDMMLRTREEVVEKIFWVQIAREEDVEKMEEQQKRQRLVFNLGDEPEAQQPVTSKKVGRNEPCPCGSGKKYKQCCGK.

ATP contacts are provided by residues Gln87, 105–109 (GEGKT), and Asp512. The disordered stretch occupies residues 857 to 894 (FNLGDEPEAQQPVTSKKVGRNEPCPCGSGKKYKQCCGK). Residues Cys880, Cys882, Cys891, and Cys892 each coordinate Zn(2+).

It belongs to the SecA family. In terms of assembly, monomer and homodimer. Part of the essential Sec protein translocation apparatus which comprises SecA, SecYEG and auxiliary proteins SecDF-YajC and YidC. The cofactor is Zn(2+).

It is found in the cell inner membrane. It localises to the cytoplasm. The catalysed reaction is ATP + H2O + cellular proteinSide 1 = ADP + phosphate + cellular proteinSide 2.. Its function is as follows. Part of the Sec protein translocase complex. Interacts with the SecYEG preprotein conducting channel. Has a central role in coupling the hydrolysis of ATP to the transfer of proteins into and across the cell membrane, serving as an ATP-driven molecular motor driving the stepwise translocation of polypeptide chains across the membrane. The protein is Protein translocase subunit SecA of Geotalea uraniireducens (strain Rf4) (Geobacter uraniireducens).